We begin with the raw amino-acid sequence, 311 residues long: MRTVTVGTRGSTLALAQTRWVVARLKEEWPDTDFRIQTISTKGDRNRESLEAMAQKGDKGFWVKEIEDALLQKRIDIAVHSLKDLPTEQPEGLEVASIPKRVDARDVLIGKEGMKRLADLPQGARVGTSSVRRKAFLRAYRPDLQVIDLRGNIDTRLAALAGDEYDAIILAAAGLIRTEMRHRIDEFVEPDILLPAPGQGALALETRSGPENDLTIEVAYAIHDHGTDDRITAEREFLAGLGAGCMAPVGAHASIKGGVLTLEGWVGALDGSKVIRATSIGDPAECADIGAELAGDMLGQGAQALIDAARE.

C245 carries the post-translational modification S-(dipyrrolylmethanemethyl)cysteine.

Belongs to the HMBS family. Monomer. The cofactor is dipyrromethane.

The enzyme catalyses 4 porphobilinogen + H2O = hydroxymethylbilane + 4 NH4(+). The protein operates within porphyrin-containing compound metabolism; protoporphyrin-IX biosynthesis; coproporphyrinogen-III from 5-aminolevulinate: step 2/4. Functionally, tetrapolymerization of the monopyrrole PBG into the hydroxymethylbilane pre-uroporphyrinogen in several discrete steps. The sequence is that of Porphobilinogen deaminase from Deinococcus deserti (strain DSM 17065 / CIP 109153 / LMG 22923 / VCD115).